We begin with the raw amino-acid sequence, 301 residues long: GTPase Era (301 aa).

Residues 7–175 (YCGFIAIVGR…AAIVRKHLPE (169 aa)) form the Era-type G domain. A G1 region spans residues 15-22 (GRPNVGKS). Residue 15–22 (GRPNVGKS) coordinates GTP. Positions 41–45 (QTTRH) are G2. The tract at residues 62 to 65 (DTPG) is G3. Residues 62–66 (DTPGL) and 124–127 (NKVD) contribute to the GTP site. The tract at residues 124–127 (NKVD) is G4. The tract at residues 154-156 (ISA) is G5. One can recognise a KH type-2 domain in the interval 206-283 (LGAELPYSVT…HLELWVKVKS (78 aa)).

Belongs to the TRAFAC class TrmE-Era-EngA-EngB-Septin-like GTPase superfamily. Era GTPase family. Monomer.

The protein resides in the cytoplasm. The protein localises to the cell inner membrane. Functionally, an essential GTPase that binds both GDP and GTP, with rapid nucleotide exchange. Plays a role in 16S rRNA processing and 30S ribosomal subunit biogenesis and possibly also in cell cycle regulation and energy metabolism. The polypeptide is GTPase Era (Escherichia coli (strain K12 / DH10B)).